The following is a 437-amino-acid chain: Probable exopolygalacturonase C (437 aa).

An N-terminal signal peptide occupies residues 1 to 21; it reads MLITKTAFLAFLLSSVPLAHG. Residues asparagine 25, asparagine 42, asparagine 82, asparagine 99, and asparagine 149 are each glycosylated (N-linked (GlcNAc...) asparagine). PbH1 repeat units lie at residues 215-236 and 238-259; these read GTNI…AVGS and SHNI…SIGS. Aspartate 229 serves as the catalytic Proton donor. Histidine 253 is an active-site residue. Residue asparagine 269 is glycosylated (N-linked (GlcNAc...) asparagine). 2 PbH1 repeats span residues 270-291 and 299-320; these read ITNL…RFKS and VKNV…FVTQ. N-linked (GlcNAc...) asparagine glycans are attached at residues asparagine 301 and asparagine 311. Cysteine 386 and cysteine 392 form a disulfide bridge. Residues asparagine 428 and asparagine 431 are each glycosylated (N-linked (GlcNAc...) asparagine).

The protein belongs to the glycosyl hydrolase 28 family.

Its subcellular location is the secreted. It carries out the reaction [(1-&gt;4)-alpha-D-galacturonosyl](n) + H2O = alpha-D-galacturonate + [(1-&gt;4)-alpha-D-galacturonosyl](n-1). Specific in hydrolyzing the terminal glycosidic bond of polygalacturonic acid and oligogalacturonates. In Aspergillus flavus (strain ATCC 200026 / FGSC A1120 / IAM 13836 / NRRL 3357 / JCM 12722 / SRRC 167), this protein is Probable exopolygalacturonase C (pgxC).